The following is a 212-amino-acid chain: Phosphatidylserine decarboxylase proenzyme (212 aa).

The active-site Schiff-base intermediate with substrate; via pyruvic acid is the serine 182. Serine 182 is subject to Pyruvic acid (Ser); by autocatalysis.

It belongs to the phosphatidylserine decarboxylase family. PSD-A subfamily. As to quaternary structure, heterodimer of a large membrane-associated beta subunit and a small pyruvoyl-containing alpha subunit. It depends on pyruvate as a cofactor. Post-translationally, is synthesized initially as an inactive proenzyme. Formation of the active enzyme involves a self-maturation process in which the active site pyruvoyl group is generated from an internal serine residue via an autocatalytic post-translational modification. Two non-identical subunits are generated from the proenzyme in this reaction, and the pyruvate is formed at the N-terminus of the alpha chain, which is derived from the carboxyl end of the proenzyme. The post-translation cleavage follows an unusual pathway, termed non-hydrolytic serinolysis, in which the side chain hydroxyl group of the serine supplies its oxygen atom to form the C-terminus of the beta chain, while the remainder of the serine residue undergoes an oxidative deamination to produce ammonia and the pyruvoyl prosthetic group on the alpha chain.

It is found in the cell membrane. It catalyses the reaction a 1,2-diacyl-sn-glycero-3-phospho-L-serine + H(+) = a 1,2-diacyl-sn-glycero-3-phosphoethanolamine + CO2. The protein operates within phospholipid metabolism; phosphatidylethanolamine biosynthesis; phosphatidylethanolamine from CDP-diacylglycerol: step 2/2. Functionally, catalyzes the formation of phosphatidylethanolamine (PtdEtn) from phosphatidylserine (PtdSer). The sequence is that of Phosphatidylserine decarboxylase proenzyme from Paraburkholderia phymatum (strain DSM 17167 / CIP 108236 / LMG 21445 / STM815) (Burkholderia phymatum).